A 247-amino-acid polypeptide reads, in one-letter code: Cell division protein ZapD (247 aa).

It belongs to the ZapD family. As to quaternary structure, interacts with FtsZ.

It is found in the cytoplasm. In terms of biological role, cell division factor that enhances FtsZ-ring assembly. Directly interacts with FtsZ and promotes bundling of FtsZ protofilaments, with a reduction in FtsZ GTPase activity. The sequence is that of Cell division protein ZapD from Cronobacter sakazakii (strain ATCC BAA-894) (Enterobacter sakazakii).